The chain runs to 310 residues: Aspartate carbamoyltransferase catalytic subunit (310 aa).

R55 and T56 together coordinate carbamoyl phosphate. K85 serves as a coordination point for L-aspartate. Residues R106, H135, and Q138 each contribute to the carbamoyl phosphate site. Residues R168 and R230 each contribute to the L-aspartate site. 2 residues coordinate carbamoyl phosphate: L268 and P269.

This sequence belongs to the aspartate/ornithine carbamoyltransferase superfamily. ATCase family. In terms of assembly, heterododecamer (2C3:3R2) of six catalytic PyrB chains organized as two trimers (C3), and six regulatory PyrI chains organized as three dimers (R2).

The catalysed reaction is carbamoyl phosphate + L-aspartate = N-carbamoyl-L-aspartate + phosphate + H(+). It functions in the pathway pyrimidine metabolism; UMP biosynthesis via de novo pathway; (S)-dihydroorotate from bicarbonate: step 2/3. Catalyzes the condensation of carbamoyl phosphate and aspartate to form carbamoyl aspartate and inorganic phosphate, the committed step in the de novo pyrimidine nucleotide biosynthesis pathway. The protein is Aspartate carbamoyltransferase catalytic subunit of Buchnera aphidicola subsp. Acyrthosiphon pisum (strain 5A).